The following is a 1791-amino-acid chain: Brefeldin A-inhibited guanine nucleotide-exchange protein 2 (1791 aa).

At methionine 1 the chain carries N-acetylmethionine. A DCB; DCB:DCB domain and DCB:HUS domain interaction region spans residues 2 to 224; it reads QESQTKSMFV…KPQSPVIQAT (223 aa). Disordered stretches follow at residues 208 to 292 and 311 to 350; these read LEKP…DNGA and AAEKQGLPEPDQAPGVPECQECTVPPAVDENSQTNGIADD. Residues serine 214, serine 218, and serine 227 each carry the phosphoserine modification. Positions 214–225 are enriched in polar residues; that stretch reads SKPQSPVIQATA. Positions 233-243 are enriched in polar residues; sequence LKQSQAQSKPT. Position 244 is a phosphothreonine (threonine 244). A compositionally biased stretch (basic and acidic residues) spans 244-257; the sequence is TPEKTELPNGDHAR. Serine 277 carries the post-translational modification Phosphoserine. A phosphoserine mark is found at serine 355 and serine 356. Residues 515 to 535 form an HUS; DCB:HUS domain interaction region; that stretch reads ADAQCVVDIYVNYDCDLNAAN. Serine 621 bears the Phosphoserine mark. The residue at position 623 (threonine 623) is a Phosphothreonine. The residue at position 624 (serine 624) is a Phosphoserine. Threonine 633 bears the Phosphothreonine mark. One can recognise an SEC7 domain in the interval 661–792; sequence FNKKPKRGIQ…IIMLTTDLHS (132 aa). Serine 707, serine 1518, serine 1520, serine 1521, serine 1532, serine 1535, serine 1541, and serine 1788 each carry phosphoserine.

Homodimer. Interacts with ARFGEF1/BIG1; both proteins are probably part of the same or very similar macromolecular complexes. Interacts with PRKAR1A, PRKAR2A, PRKAR1B, PRKAR2B, PPP1CC, PDE3A, TNFRSF1A, MYCBP and EXOC7. Interacts with GABRB1, GABRB2 and GABRB3. In terms of processing, in vitro phosphorylated by PKA reducing its GEF activity and dephosphorylated by phosphatase PP1. In terms of tissue distribution, expressed in brain (at protein level).

The protein resides in the cytoplasm. The protein localises to the membrane. Its subcellular location is the golgi apparatus. It localises to the perinuclear region. It is found in the trans-Golgi network. The protein resides in the endosome. The protein localises to the cytoskeleton. Its subcellular location is the microtubule organizing center. It localises to the centrosome. It is found in the cell projection. The protein resides in the dendrite. The protein localises to the cytoplasmic vesicle. Its subcellular location is the synapse. Its activity is regulated as follows. Inhibited by brefeldin A. Promotes guanine-nucleotide exchange on ARF1 and ARF3 and to a lower extent on ARF5 and ARF6. Promotes the activation of ARF1/ARF5/ARF6 through replacement of GDP with GTP. Involved in the regulation of Golgi vesicular transport. Required for the integrity of the endosomal compartment. Involved in trafficking from the trans-Golgi network (TGN) to endosomes and is required for membrane association of the AP-1 complex and GGA1. Seems to be involved in recycling of the transferrin receptor from recycling endosomes to the plasma membrane. Probably is involved in the exit of GABA(A) receptors from the endoplasmic reticulum. Involved in constitutive release of tumor necrosis factor receptor 1 via exosome-like vesicles; the function seems to involve PKA and specifically PRKAR2B. Proposed to act as A kinase-anchoring protein (AKAP) and may mediate crosstalk between Arf and PKA pathways. The protein is Brefeldin A-inhibited guanine nucleotide-exchange protein 2 (Arfgef2) of Rattus norvegicus (Rat).